The sequence spans 303 residues: Polyisoprenyl-teichoic acid--peptidoglycan teichoic acid transferase TagU (303 aa).

Topologically, residues 1-4 (MKKK) are cytoplasmic. The helical; Signal-anchor for type II membrane protein transmembrane segment at 5–25 (ILFWVLGILGVLIIGGGIYAY) threads the bilayer. Residues 26–303 (NVYSSVSNTL…KLRTHLEVTK (278 aa)) are Extracellular-facing.

Belongs to the LytR/CpsA/Psr (LCP) family.

It localises to the cell membrane. The protein operates within cell wall biogenesis. Its function is as follows. May catalyze the final step in cell wall teichoic acid biosynthesis, the transfer of the anionic cell wall polymers (APs) from their lipid-linked precursor to the cell wall peptidoglycan (PG). This chain is Polyisoprenyl-teichoic acid--peptidoglycan teichoic acid transferase TagU, found in Bacillus anthracis (strain A0248).